Reading from the N-terminus, the 1102-residue chain is Probable ubiquitin-conjugating enzyme E2 23 (1102 aa).

Disordered stretches follow at residues 1-20 (MEHE…DSSV), 25-111 (ASLS…DGNY), 396-418 (LPKV…PVHE), 579-602 (SPGN…SHQE), 661-710 (DESV…DIYA), and 760-800 (QAES…KNIL). A compositionally biased stretch (basic and acidic residues) spans 31-44 (DSEHPNIYRQDIVK). Residues 59-88 (GDSDSDSDISDEEEDDDDDEDNDDDDEDVE) show a composition bias toward acidic residues. Positions 579–596 (SPGNSFEEATQQDNGYQD) are enriched in polar residues. Polar residues predominate over residues 779-800 (SKVNVTDNCESKGTQANAKNIL). Positions 850–1010 (QWFKKVDQDW…TFLLNCKTMM (161 aa)) constitute a UBC core domain. Cys936 (glycyl thioester intermediate) is an active-site residue.

This sequence belongs to the ubiquitin-conjugating enzyme family.

The catalysed reaction is S-ubiquitinyl-[E1 ubiquitin-activating enzyme]-L-cysteine + [E2 ubiquitin-conjugating enzyme]-L-cysteine = [E1 ubiquitin-activating enzyme]-L-cysteine + S-ubiquitinyl-[E2 ubiquitin-conjugating enzyme]-L-cysteine.. The protein operates within protein modification; protein ubiquitination. In terms of biological role, accepts the ubiquitin from the E1 complex and catalyzes its covalent attachment to other proteins. The chain is Probable ubiquitin-conjugating enzyme E2 23 (UBC23) from Arabidopsis thaliana (Mouse-ear cress).